Consider the following 86-residue polypeptide: Small ribosomal subunit protein uS17 (86 aa).

The protein belongs to the universal ribosomal protein uS17 family. In terms of assembly, part of the 30S ribosomal subunit.

One of the primary rRNA binding proteins, it binds specifically to the 5'-end of 16S ribosomal RNA. In Desulfitobacterium hafniense (strain DSM 10664 / DCB-2), this protein is Small ribosomal subunit protein uS17.